Here is a 96-residue protein sequence, read N- to C-terminus: uncharacterized protein (96 aa).

Residues 1–21 (MSDFEIIVGISSLLQVIILNI) traverse the membrane as a helical segment.

The protein resides in the membrane. This is an uncharacterized protein from Saccharomyces cerevisiae (strain ATCC 204508 / S288c) (Baker's yeast).